Reading from the N-terminus, the 1107-residue chain is Miniconductance mechanosensitive channel MscM (1107 aa).

The signal sequence occupies residues 1 to 19 (MRLIITFLMAWCLSWGAYA). 11 helical membrane passes run 467 to 487 (VMML…ILVG), 522 to 542 (LFWS…LGYG), 551 to 571 (LAVA…VVMI), 600 to 620 (YLMS…FDNL), 628 to 648 (SLGR…TLSL), 674 to 694 (MMIG…LATA), 698 to 718 (LARL…YHVI), 785 to 805 (ILML…HSAF), 828 to 848 (PITL…TQLV), 875 to 895 (TITK…MIGI), and 910 to 930 (GLGF…IILF).

Belongs to the MscS (TC 1.A.23) family. Homoheptamer.

The protein resides in the cell inner membrane. Its function is as follows. Mechanosensitive channel that protects cells against hypoosmotic stress when highly overexpressed. Gates spontaneously in response to increased membrane tension. The chain is Miniconductance mechanosensitive channel MscM (mscM) from Escherichia coli (strain K12).